Reading from the N-terminus, the 163-residue chain is Single-stranded DNA-binding protein 1 (163 aa).

One can recognise an SSB domain in the interval 1–104 (MINNVVLVGR…VVAESFQLLE (104 aa)). The interval 106 to 163 (RATREGGSPNSYNNGGYNNAPSNNSYSASSQQTPNFSRDESPFGNSNPMDISDDDLPF) is disordered. Over residues 111 to 135 (GGSPNSYNNGGYNNAPSNNSYSASS) the composition is skewed to low complexity. An Important for interaction with partner proteins motif is present at residues 158 to 163 (DDDLPF).

In terms of assembly, homotetramer.

In terms of biological role, plays an important role in DNA replication, recombination and repair. Binds to ssDNA and to an array of partner proteins to recruit them to their sites of action during DNA metabolism. This Streptococcus agalactiae serotype III (strain NEM316) protein is Single-stranded DNA-binding protein 1 (ssb1).